Here is a 142-residue protein sequence, read N- to C-terminus: Glia maturation factor gamma (142 aa).

An N-acetylserine modification is found at Ser2. Residues 4-139 enclose the ADF-H domain; that stretch reads SLVVCDVDPE…NETWLKEKLA (136 aa).

It belongs to the actin-binding proteins ADF family. GMF subfamily. As to expression, expressed in rat thymus, testis, and spleen. Is present predominantly in proliferative and differentiative organs.

The protein is Glia maturation factor gamma (Gmfg) of Rattus norvegicus (Rat).